The chain runs to 351 residues: DNA polymerase IV (351 aa).

Residues 4–185 enclose the UmuC domain; it reads IIHVDMDCFF…LPLGKIPGVG (182 aa). Mg(2+) contacts are provided by Asp-8 and Asp-103. Residue Glu-104 is part of the active site.

This sequence belongs to the DNA polymerase type-Y family. Monomer. Requires Mg(2+) as cofactor.

The protein resides in the cytoplasm. It catalyses the reaction DNA(n) + a 2'-deoxyribonucleoside 5'-triphosphate = DNA(n+1) + diphosphate. Poorly processive, error-prone DNA polymerase involved in untargeted mutagenesis. Copies undamaged DNA at stalled replication forks, which arise in vivo from mismatched or misaligned primer ends. These misaligned primers can be extended by PolIV. Exhibits no 3'-5' exonuclease (proofreading) activity. May be involved in translesional synthesis, in conjunction with the beta clamp from PolIII. This is DNA polymerase IV from Cronobacter sakazakii (strain ATCC BAA-894) (Enterobacter sakazakii).